Reading from the N-terminus, the 235-residue chain is Small ribosomal subunit protein eS4 (235 aa).

The region spanning 37–100 (LPLGIIIRDI…NEAYRMLQDE (64 aa)) is the S4 RNA-binding domain.

Belongs to the eukaryotic ribosomal protein eS4 family.

The protein is Small ribosomal subunit protein eS4 of Methanosarcina acetivorans (strain ATCC 35395 / DSM 2834 / JCM 12185 / C2A).